Reading from the N-terminus, the 393-residue chain is Putative amino-acid ABC transporter permease protein YhdX (393 aa).

The next 8 helical transmembrane spans lie at 21 to 41 (AWLFQILAVVAVVGIVGWLFH), 92 to 112 (LLVSALCIVFASVLGFFIGLA), 128 to 148 (IEIFRNIPPLLQIFFWYFAVL), 180 to 200 (DGFIAFILAVVMAIVLSVGLF), 219 to 239 (IAAVLIIGLPLLAQWLFGAAL), 256 to 276 (VLIPELAALTLALSVYTSAFI), 333 to 353 (SSLAAAIGYPDMVSLFAGTVL), and 363 to 383 (IAMTMSVYLIISLTISLLMNI). In terms of domain architecture, ABC transmembrane type-1 spans 88 to 381 (LLNTLLVSAL…IISLTISLLM (294 aa)).

The protein belongs to the binding-protein-dependent transport system permease family. HisMQ subfamily.

It localises to the cell inner membrane. In terms of biological role, probably part of the binding-protein-dependent transport system YdhWXYZ for an amino acid; probably responsible for the translocation of the substrate across the membrane. This Escherichia coli (strain K12) protein is Putative amino-acid ABC transporter permease protein YhdX (yhdX).